The primary structure comprises 140 residues: MSIMQVEVVSGEQKIYSGEATFIVVPTVQGELGIYPRHEPIMSLVRPGALRLTVPGEDKEVLVAVSGGILEVQPDKVTVLADVAVRSAEMDRARAEEAKKAAEAGISQAKDDKALAEAHKALAAAIAQLKTLDYIRSHKK.

It belongs to the ATPase epsilon chain family. In terms of assembly, F-type ATPases have 2 components, CF(1) - the catalytic core - and CF(0) - the membrane proton channel. CF(1) has five subunits: alpha(3), beta(3), gamma(1), delta(1), epsilon(1). CF(0) has three main subunits: a, b and c.

Its subcellular location is the cell inner membrane. Functionally, produces ATP from ADP in the presence of a proton gradient across the membrane. This is ATP synthase epsilon chain from Neisseria gonorrhoeae (strain ATCC 700825 / FA 1090).